A 449-amino-acid chain; its full sequence is UDP-N-acetylmuramoylalanine--D-glutamate ligase (449 aa).

ATP is bound at residue 119 to 125; that stretch reads GTNGKTT.

It belongs to the MurCDEF family.

The protein resides in the cytoplasm. It carries out the reaction UDP-N-acetyl-alpha-D-muramoyl-L-alanine + D-glutamate + ATP = UDP-N-acetyl-alpha-D-muramoyl-L-alanyl-D-glutamate + ADP + phosphate + H(+). It participates in cell wall biogenesis; peptidoglycan biosynthesis. Cell wall formation. Catalyzes the addition of glutamate to the nucleotide precursor UDP-N-acetylmuramoyl-L-alanine (UMA). This Lactococcus lactis subsp. cremoris (strain SK11) protein is UDP-N-acetylmuramoylalanine--D-glutamate ligase.